Here is an 80-residue protein sequence, read N- to C-terminus: Large ribosomal subunit protein uL24 (80 aa).

The disordered stretch occupies residues 53–80 (HMKPTQSHPQGSIIEREFPIHASNVKKS).

It belongs to the universal ribosomal protein uL24 family. As to quaternary structure, part of the 50S ribosomal subunit.

Its function is as follows. One of two assembly initiator proteins, it binds directly to the 5'-end of the 23S rRNA, where it nucleates assembly of the 50S subunit. In terms of biological role, one of the proteins that surrounds the polypeptide exit tunnel on the outside of the subunit. This chain is Large ribosomal subunit protein uL24, found in Chlorobium limicola (strain DSM 245 / NBRC 103803 / 6330).